A 580-amino-acid polypeptide reads, in one-letter code: MNLFTDIRTLVIDSLAAMTAEGALPEGLDFANVTVEPPRDAAHGDMATNAAMVLAKPAKMKPRDIAEALAAKLAQDKRITSAEVAGPGFLNLRLDLSVWQDVLGKALNAEEAYGRSDMGQGKRVNVEYVSANPTGPLHVGHTRGAVFGDALASLLDFAGYDVTREYYINDGGAQVDVLARSAYLRYLEAHGQSVEFPDGTYPGEYLKDVGAALKDKFGDRFVGQPEETWLEEVRNFATDMMMDLIREDLALLGVEMDVFYSEKSLYGTGRIEAALESLDAKGLIYEGVLEPPKGKKPDDWEPRIQTLFKSTEHGDDVDRPVKKSDGAWTYFAPDIAYHYDKVSRGFDMLIDIFGADHGGYVKRMKAAVSALSDGKVPLDVKLCQLVKLFKDGQEFKMSKRAGTFVTLRDVVDAVGADVTRFMLLTRKNDQGFDFDLDKALEQSKDNPVFYVQYANARIHSTLRKAREAGIACDEATLSGADLSLLTHDAQLAVARKVAEWPRQVEIAARTNEPHRIAFFLYELASDLHGLYHLGKSEESLRFVNESSELATHANLALARAVSIVISAGLGILGVKPAQEM.

Residues 131 to 141 (ANPTGPLHVGH) carry the 'HIGH' region motif.

It belongs to the class-I aminoacyl-tRNA synthetase family. In terms of assembly, monomer.

The protein localises to the cytoplasm. It catalyses the reaction tRNA(Arg) + L-arginine + ATP = L-arginyl-tRNA(Arg) + AMP + diphosphate. The polypeptide is Arginine--tRNA ligase (Ruegeria sp. (strain TM1040) (Silicibacter sp.)).